Reading from the N-terminus, the 172-residue chain is Type IV secretion system putative outer membrane lipoprotein BMEII0036 (172 aa).

The N-terminal stretch at 1-15 (MRTLVMVACAVSLAA) is a signal peptide. The N-palmitoyl cysteine moiety is linked to residue C16. C16 carries the S-diacylglycerol cysteine lipid modification. Residues 58–172 (WPARPPKQTV…RRVDIEILRK (115 aa)) enclose the OmpA-like domain.

The protein resides in the cell outer membrane. This is Type IV secretion system putative outer membrane lipoprotein BMEII0036 from Brucella melitensis biotype 1 (strain ATCC 23456 / CCUG 17765 / NCTC 10094 / 16M).